Reading from the N-terminus, the 471-residue chain is Cysteine--tRNA ligase (471 aa).

Cys-30 is a binding site for Zn(2+). The 'HIGH' region motif lies at 32-42; it reads PTVYNFAHIGN. Zn(2+)-binding residues include Cys-212, His-237, and Glu-241. The 'KMSKS' region motif lies at 270–274; the sequence is KMSKS. Residue Lys-273 coordinates ATP.

This sequence belongs to the class-I aminoacyl-tRNA synthetase family. As to quaternary structure, monomer. Zn(2+) serves as cofactor.

It localises to the cytoplasm. The catalysed reaction is tRNA(Cys) + L-cysteine + ATP = L-cysteinyl-tRNA(Cys) + AMP + diphosphate. This chain is Cysteine--tRNA ligase, found in Leptospira interrogans serogroup Icterohaemorrhagiae serovar copenhageni (strain Fiocruz L1-130).